Here is a 340-residue protein sequence, read N- to C-terminus: Ribosomal RNA large subunit methyltransferase F (340 aa).

Positions methionine 1–arginine 36 are disordered.

It belongs to the methyltransferase superfamily. METTL16/RlmF family.

It is found in the cytoplasm. The enzyme catalyses adenosine(1618) in 23S rRNA + S-adenosyl-L-methionine = N(6)-methyladenosine(1618) in 23S rRNA + S-adenosyl-L-homocysteine + H(+). In terms of biological role, specifically methylates the adenine in position 1618 of 23S rRNA. This Pseudomonas fluorescens (strain Pf0-1) protein is Ribosomal RNA large subunit methyltransferase F.